The following is a 125-amino-acid chain: uncharacterized protein (125 aa).

Residues 1–46 (MFFDTKVLNYPTIHKSISMASTMQRTSSSAASNERQLSQLQRRAPS) constitute a chloroplast transit peptide.

The protein localises to the plastid. It is found in the chloroplast. This is an uncharacterized protein from Arabidopsis thaliana (Mouse-ear cress).